Reading from the N-terminus, the 413-residue chain is Sporulation-specific protein 74 (413 aa).

Residues 1 to 87 (MGAGTLLNGL…SEHTDDFNDG (87 aa)) form a disordered region. The span at 69-83 (HENKDIHERSEHTDD) shows a compositional bias: basic and acidic residues.

As to quaternary structure, interacts with itself. Interacts with MPC54, NUD1 and SPO21/MPC70.

It is found in the cytoplasm. The protein localises to the cytoskeleton. The protein resides in the microtubule organizing center. It localises to the spindle pole body. Involved in the pathway that organizes the shaping and sizing of the prospore membrane (PSM) during sporulation. Probable component of a core structural unit of the scaffold that initiates synthesis of the prospore membrane. In Saccharomyces cerevisiae (strain ATCC 204508 / S288c) (Baker's yeast), this protein is Sporulation-specific protein 74 (SPO74).